Here is a 530-residue protein sequence, read N- to C-terminus: Metal transporter Nramp5 (530 aa).

Positions 1–10 (MTGSTVSRQE) are enriched in polar residues. Residues 1–53 (MTGSTVSRQENSPKRPNDSNGEFKRLLVPETSQPEEDELHESPPENQILNVEE) form a disordered region. A compositionally biased stretch (basic and acidic residues) spans 11–27 (NSPKRPNDSNGEFKRLL). 12 consecutive transmembrane segments (helical) span residues 65 to 85 (FSWAKLWKFTGPGFLMSIAFL), 98 to 118 (AVAGYSLLWLLLWATLMGLLM), 147 to 167 (ILLWFMAEVALIGADIQEVIG), 179 to 199 (FLPIWVGVIITSFDCFLISYL), 207 to 227 (LEGLFAVLIATMALSFAWMFN), 253 to 273 (AVGVVGCVITPHNVFLHSALV), 299 to 319 (AALFVSFMINLFVTAVFAKGF), 341 to 361 (YGGGVFPILYIWGIGLLAAGQ), 387 to 407 (LSAFITRSFAIVPTMFVAIMF), 429 to 449 (IPFAVIPLLTMVSNEHIMGVF), 458 to 478 (LAWTVAVFVMMINGYLLLDFF), and 485 to 505 (FLVGFLVFGGVVGYISFIIYL).

This sequence belongs to the NRAMP (TC 2.A.55) family.

It is found in the membrane. Seems to be involved in iron uptake. This Arabidopsis thaliana (Mouse-ear cress) protein is Metal transporter Nramp5 (NRAMP5).